The sequence spans 364 residues: Lipid-A-disaccharide synthase (364 aa).

Belongs to the LpxB family.

The enzyme catalyses a lipid X + a UDP-2-N,3-O-bis[(3R)-3-hydroxyacyl]-alpha-D-glucosamine = a lipid A disaccharide + UDP + H(+). It functions in the pathway bacterial outer membrane biogenesis; LPS lipid A biosynthesis. Its function is as follows. Condensation of UDP-2,3-diacylglucosamine and 2,3-diacylglucosamine-1-phosphate to form lipid A disaccharide, a precursor of lipid A, a phosphorylated glycolipid that anchors the lipopolysaccharide to the outer membrane of the cell. This is Lipid-A-disaccharide synthase from Campylobacter jejuni (strain RM1221).